A 242-amino-acid polypeptide reads, in one-letter code: 1-(5-phosphoribosyl)-5-[(5-phosphoribosylamino)methylideneamino] imidazole-4-carboxamide isomerase (242 aa).

Residue Asp-8 is the Proton acceptor of the active site. Residue Asp-129 is the Proton donor of the active site.

This sequence belongs to the HisA/HisF family.

The protein resides in the cytoplasm. The catalysed reaction is 1-(5-phospho-beta-D-ribosyl)-5-[(5-phospho-beta-D-ribosylamino)methylideneamino]imidazole-4-carboxamide = 5-[(5-phospho-1-deoxy-D-ribulos-1-ylimino)methylamino]-1-(5-phospho-beta-D-ribosyl)imidazole-4-carboxamide. It participates in amino-acid biosynthesis; L-histidine biosynthesis; L-histidine from 5-phospho-alpha-D-ribose 1-diphosphate: step 4/9. This is 1-(5-phosphoribosyl)-5-[(5-phosphoribosylamino)methylideneamino] imidazole-4-carboxamide isomerase from Beijerinckia indica subsp. indica (strain ATCC 9039 / DSM 1715 / NCIMB 8712).